We begin with the raw amino-acid sequence, 413 residues long: 1-acylglycerol-3-phosphate O-acyltransferase Pnpla3 (413 aa).

Over 1–42 the chain is Cytoplasmic; that stretch reads MYDPERRWSLSFAGCGFLGFYHVGATLCLSERAPHLLRDART. Residues 10–179 enclose the PNPLA domain; the sequence is LSFAGCGFLG…SDNVPVLDAK (170 aa). The GXGXXG motif lies at 14 to 19; the sequence is GCGFLG. A helical; Signal-anchor for type II membrane protein membrane pass occupies residues 43 to 63; it reads FFGCSAGALHAVTFVCSLPLG. Positions 45-49 match the GXSXG motif; that stretch reads GCSAG. The active-site Nucleophile is Ser47. Over 64–413 the chain is Lumenal; it reads RIMEILMDLV…HKPQGNSAGL (350 aa). The active-site Proton acceptor is the Asp166. Positions 166–168 match the DGA/G motif; that stretch reads DGG. Residues Asn206 and Asn209 are each glycosylated (N-linked (GlcNAc...) asparagine). The interval 389–413 is disordered; it reads KDDHRMLKHGHHPSPHKPQGNSAGL. The span at 394 to 403 shows a compositional bias: basic residues; the sequence is MLKHGHHPSP.

In terms of tissue distribution, restricted to adipose tissue. Expressed in inguinal and epididymal white adipose tissues and in interscapular brown adipose tissue. Also expressed in liver in response to high-sucrose diet.

Its subcellular location is the membrane. The protein resides in the lipid droplet. The catalysed reaction is a 1-acyl-sn-glycero-3-phosphate + an acyl-CoA = a 1,2-diacyl-sn-glycero-3-phosphate + CoA. The enzyme catalyses a triacylglycerol + H2O = a diacylglycerol + a fatty acid + H(+). It carries out the reaction a 1-acylglycerol + a 1,3-diacylglycerol = a triacylglycerol + glycerol. It catalyses the reaction a 1-acylglycerol + a 1,2-diacylglycerol = a triacylglycerol + glycerol. The catalysed reaction is 2 a 1-acylglycerol = a 1,2-diacylglycerol + glycerol. The enzyme catalyses 1-(9Z-octadecenoyl)-sn-glycero-3-phosphate + (9Z)-octadecenoyl-CoA = 1,2-di-(9Z-octadecenoyl)-sn-glycero-3-phosphate + CoA. It carries out the reaction 1-(9Z-octadecenoyl)-sn-glycero-3-phosphate + hexadecanoyl-CoA = 1-(9Z)-octadecenoyl-2-hexadecanoyl-sn-glycero-3-phosphate + CoA. It catalyses the reaction 1-(9Z-octadecenoyl)-sn-glycero-3-phosphate + (9Z,12Z)-octadecadienoyl-CoA = 1-(9Z)-octadecenoyl-2-(9Z,12Z)-octadecadienoyl-sn-glycero-3-phosphate + CoA. The catalysed reaction is 1-(9Z-octadecenoyl)-sn-glycero-3-phosphate + (5Z,8Z,11Z,14Z)-eicosatetraenoyl-CoA = 1-(9Z)-octadecenoyl-2-(5Z,8Z,11Z,14Z)-eicosatetraenoyl-sn-glycero-3-phosphate + CoA. The enzyme catalyses 2 1-(9Z-octadecenoyl)-glycerol = 1,2-di-(9Z-octadecenoyl)-glycerol + glycerol. It carries out the reaction 1-(9Z-octadecenoyl)-glycerol + 1,2-di-(9Z-octadecenoyl)-glycerol = 1,2,3-tri-(9Z-octadecenoyl)-glycerol + glycerol. It catalyses the reaction 1-(9Z-octadecenoyl)-glycerol + 1,3-di-(9Z-octadecenoyl)-glycerol = 1,2,3-tri-(9Z-octadecenoyl)-glycerol + glycerol. The catalysed reaction is 1,2,3-tri-(9Z-octadecenoyl)-glycerol + H2O = 1,3-di-(9Z-octadecenoyl)-glycerol + (9Z)-octadecenoate + H(+). The enzyme catalyses a 1,2-diacyl-sn-glycero-3-phosphocholine + H2O = a 1-acyl-sn-glycero-3-phosphocholine + a fatty acid + H(+). Its pathway is phospholipid metabolism. The protein operates within glycerolipid metabolism. Functionally, specifically catalyzes coenzyme A (CoA)-dependent acylation of 1-acyl-sn-glycerol 3-phosphate (2-lysophosphatidic acid/LPA) to generate phosphatidic acid (PA), an important metabolic intermediate and precursor for both triglycerides and glycerophospholipids. Does not esterify other lysophospholipids. Acyl donors are long chain (at least C16) fatty acyl-CoAs: arachidonoyl-CoA, linoleoyl-CoA, oleoyl-CoA and at a lesser extent palmitoyl-CoA. Additionally possesses low triacylglycerol lipase and CoA-independent acylglycerol transacylase activities and thus may play a role in acyl-chain remodeling of triglycerides. In vitro may express hydrolytic activity against glycerolipids triacylglycerol, diacylglycerol and monoacylglycerol, with a strong preference for oleic acid as the acyl moiety. However, the triacylglycerol hydrolase activity is controversial and may be very low. Possesses phospholipase A2 activity. The chain is 1-acylglycerol-3-phosphate O-acyltransferase Pnpla3 from Mus musculus (Mouse).